Here is a 421-residue protein sequence, read N- to C-terminus: Testin (421 aa).

The 108-residue stretch at 92–199 folds into the PET domain; sequence MILTNPVAAK…GDVKLPCEMD (108 aa). The interval 133–164 is disordered; that stretch reads EKQPVAGSEGAQYRKKQLAKQLPAHDQDPSKC. The span at 155 to 164 shows a compositional bias: basic and acidic residues; the sequence is PAHDQDPSKC. 3 LIM zinc-binding domains span residues 234–297, 299–359, and 362–421; these read YSCY…CDSE, PRCA…NHAV, and QGCH…KMMS.

It belongs to the prickle / espinas / testin family. Interacts via LIM domain 1 with ZYX. Interacts (via LIM domain 3) with ENAH and VASP. Interacts with ALKBH4, talin, actin, alpha-actinin, GRIP1 and PXN. Interacts (via LIM domain 2) with ACTL7A (via N-terminus). Heterodimer with ACTL7A; the heterodimer interacts with ENAH to form a heterotrimer.

Its subcellular location is the cytoplasm. It is found in the cell junction. The protein resides in the focal adhesion. In terms of biological role, scaffold protein that may play a role in cell adhesion, cell spreading and in the reorganization of the actin cytoskeleton. Plays a role in the regulation of cell proliferation. May act as a tumor suppressor. In Papio anubis (Olive baboon), this protein is Testin (TES).